The following is an 877-amino-acid chain: Protein P (877 aa).

The terminal protein domain (TP) stretch occupies residues 1-183 (MHPFSQLFRN…GKPYSWGHRQ (183 aa)). The segment at 184 to 382 (LEQHNGQQHE…YCLHHIVSSL (199 aa)) is spacer. Residues 185-198 (EQHNGQQHESHLQS) show a composition bias toward basic and acidic residues. Residues 185-347 (EQHNGQQHES…PSSSGLCGGT (163 aa)) are disordered. Polar residues predominate over residues 233-242 (FGESQKSART). Low complexity predominate over residues 267–281 (QQGSSQVSSPRSKSS). Polar residues-rich tracts occupy residues 282-302 (NFRN…PTWY) and 338-347 (PSSSGLCGGT). A polymerase/reverse transcriptase domain (RT) region spans residues 383–723 (EDWGPCTISG…YAELWPVARQ (341 aa)). The Reverse transcriptase domain occupies 393-634 (DVTIRSPRTP…HHLHFMGYVI (242 aa)). Positions 465, 585, and 586 each coordinate Mg(2+).

This sequence belongs to the hepadnaviridae P protein family.

The enzyme catalyses DNA(n) + a 2'-deoxyribonucleoside 5'-triphosphate = DNA(n+1) + diphosphate. It carries out the reaction Endonucleolytic cleavage to 5'-phosphomonoester.. With respect to regulation, activated by host HSP70 and HSP40 in vitro to be able to bind the epsilon loop of the pgRNA. Because deletion of the RNase H region renders the protein partly chaperone-independent, the chaperones may be needed indirectly to relieve occlusion of the RNA-binding site by this domain. Inhibited by several reverse-transcriptase inhibitors: Lamivudine, Adefovir and Entecavir. Functionally, multifunctional enzyme that converts the viral RNA genome into dsDNA in viral cytoplasmic capsids. This enzyme displays a DNA polymerase activity that can copy either DNA or RNA templates, and a ribonuclease H (RNase H) activity that cleaves the RNA strand of RNA-DNA heteroduplexes in a partially processive 3'- to 5'-endonucleasic mode. Neo-synthesized pregenomic RNA (pgRNA) are encapsidated together with the P protein, and reverse-transcribed inside the nucleocapsid. Initiation of reverse-transcription occurs first by binding the epsilon loop on the pgRNA genome, and is initiated by protein priming, thereby the 5'-end of (-)DNA is covalently linked to P protein. Partial (+)DNA is synthesized from the (-)DNA template and generates the relaxed circular DNA (RC-DNA) genome. After budding and infection, the RC-DNA migrates in the nucleus, and is converted into a plasmid-like covalently closed circular DNA (cccDNA). The activity of P protein does not seem to be necessary for cccDNA generation, and is presumably released from (+)DNA by host nuclear DNA repair machinery. The polypeptide is Protein P (Arctic squirrel hepatitis virus (ASHV)).